A 572-amino-acid polypeptide reads, in one-letter code: Urease subunit alpha (572 aa).

Residues 130–572 (GGVDTHIHFI…LPMAQRYFLF (443 aa)) enclose the Urease domain. Ni(2+) is bound by residues H135, H137, and K218. K218 bears the N6-carboxylysine mark. H220 is a substrate binding site. Ni(2+) contacts are provided by H247 and H273. The active-site Proton donor is the H321. A Ni(2+)-binding site is contributed by D361.

This sequence belongs to the metallo-dependent hydrolases superfamily. Urease alpha subunit family. In terms of assembly, heterotrimer of UreA (gamma), UreB (beta) and UreC (alpha) subunits. Three heterotrimers associate to form the active enzyme. Requires Ni cation as cofactor. Post-translationally, carboxylation allows a single lysine to coordinate two nickel ions.

The protein resides in the cytoplasm. The enzyme catalyses urea + 2 H2O + H(+) = hydrogencarbonate + 2 NH4(+). It functions in the pathway nitrogen metabolism; urea degradation; CO(2) and NH(3) from urea (urease route): step 1/1. This Ralstonia nicotianae (strain ATCC BAA-1114 / GMI1000) (Ralstonia solanacearum) protein is Urease subunit alpha.